The primary structure comprises 166 residues: Endoribonuclease YbeY (166 aa).

3 residues coordinate Zn(2+): H129, H133, and H139.

It belongs to the endoribonuclease YbeY family. Zn(2+) serves as cofactor.

It is found in the cytoplasm. In terms of biological role, single strand-specific metallo-endoribonuclease involved in late-stage 70S ribosome quality control and in maturation of the 3' terminus of the 16S rRNA. This chain is Endoribonuclease YbeY, found in Mesorhizobium japonicum (strain LMG 29417 / CECT 9101 / MAFF 303099) (Mesorhizobium loti (strain MAFF 303099)).